The sequence spans 265 residues: NAD-capped RNA hydrolase NudC (265 aa).

Arginine 76 contributes to the substrate binding site. Zn(2+) contacts are provided by cysteine 106, cysteine 109, cysteine 124, and cysteine 127. Tyrosine 132 serves as a coordination point for substrate. One can recognise a Nudix hydrolase domain in the interval 133-256 (PRISPAMMVL…SIAHRLIRHA (124 aa)). The a divalent metal cation site is built by alanine 166, glutamate 182, and glutamate 186. A Nudix box motif is present at residues 167-188 (GFVEPGETLEECVHRETWEEVG). A substrate-binding site is contributed by 200-207 (QSWPFPHS). Glutamate 227 lines the a divalent metal cation pocket. Residue alanine 249 participates in substrate binding.

The protein belongs to the Nudix hydrolase family. NudC subfamily. Homodimer. Mg(2+) serves as cofactor. It depends on Mn(2+) as a cofactor. Requires Zn(2+) as cofactor.

It catalyses the reaction a 5'-end NAD(+)-phospho-ribonucleoside in mRNA + H2O = a 5'-end phospho-adenosine-phospho-ribonucleoside in mRNA + beta-nicotinamide D-ribonucleotide + 2 H(+). The enzyme catalyses NAD(+) + H2O = beta-nicotinamide D-ribonucleotide + AMP + 2 H(+). The catalysed reaction is NADH + H2O = reduced beta-nicotinamide D-ribonucleotide + AMP + 2 H(+). Its function is as follows. mRNA decapping enzyme that specifically removes the nicotinamide adenine dinucleotide (NAD) cap from a subset of mRNAs by hydrolyzing the diphosphate linkage to produce nicotinamide mononucleotide (NMN) and 5' monophosphate mRNA. The NAD-cap is present at the 5'-end of some mRNAs and stabilizes RNA against 5'-processing. Has preference for mRNAs with a 5'-end purine. Catalyzes the hydrolysis of a broad range of dinucleotide pyrophosphates. The polypeptide is NAD-capped RNA hydrolase NudC (Chromobacterium violaceum (strain ATCC 12472 / DSM 30191 / JCM 1249 / CCUG 213 / NBRC 12614 / NCIMB 9131 / NCTC 9757 / MK)).